Here is a 301-residue protein sequence, read N- to C-terminus: Acetyl-coenzyme A carboxylase carboxyl transferase subunit beta (301 aa).

The 270-residue stretch at 25-294 folds into the CoA carboxyltransferase N-terminal domain; sequence LWIKCPETGE…SAANDVTRGA (270 aa).

It belongs to the AccD/PCCB family. Acetyl-CoA carboxylase is a heterohexamer composed of biotin carboxyl carrier protein (AccB), biotin carboxylase (AccC) and two subunits each of ACCase subunit alpha (AccA) and ACCase subunit beta (AccD).

The protein resides in the cytoplasm. It catalyses the reaction N(6)-carboxybiotinyl-L-lysyl-[protein] + acetyl-CoA = N(6)-biotinyl-L-lysyl-[protein] + malonyl-CoA. The protein operates within lipid metabolism; malonyl-CoA biosynthesis; malonyl-CoA from acetyl-CoA: step 1/1. Component of the acetyl coenzyme A carboxylase (ACC) complex. Biotin carboxylase (BC) catalyzes the carboxylation of biotin on its carrier protein (BCCP) and then the CO(2) group is transferred by the transcarboxylase to acetyl-CoA to form malonyl-CoA. The sequence is that of Acetyl-coenzyme A carboxylase carboxyl transferase subunit beta from Rhizobium etli (strain ATCC 51251 / DSM 11541 / JCM 21823 / NBRC 15573 / CFN 42).